A 343-amino-acid polypeptide reads, in one-letter code: Labda-7,13(16),14-triene synthase (343 aa).

Mg(2+)-binding residues include aspartate 114 and glutamate 119. A DDXXXE motif motif is present at residues 114–119 (DDVHVE). Residue arginine 206 participates in substrate binding. Asparagine 252, serine 256, and glutamate 260 together coordinate Mg(2+). Residues 252 to 260 (NDLYSFAYE) carry the NXXXSXXXE motif motif.

It belongs to the terpene synthase family. Mg(2+) serves as cofactor.

The catalysed reaction is (13E)-labda-7,13-dien-15-yl diphosphate = labda-7,13(16),14-triene + diphosphate. Functionally, involved in the biosynthesis of the labdane-type bicyclic diterpene labda-7,13(16),14-triene. Catalyzes the conversion of labda-7,13(E)-dienyl diphosphate to yield labda-7,13(16),14-triene. This chain is Labda-7,13(16),14-triene synthase, found in Streptomyces clavuligerus.